A 449-amino-acid chain; its full sequence is Elongation factor 1-alpha (449 aa).

A tr-type G domain is found at 5–234 (KQHVSIVVIG…DNCDPPKRPV (230 aa)). The interval 14–21 (GHVDSGKS) is G1. Residue 14–21 (GHVDSGKS) coordinates GTP. Lys-55 is modified (N6,N6-dimethyllysine). The segment at 70-74 (GITID) is G2. Lys-79 carries the N6,N6,N6-trimethyllysine modification. Positions 91–94 (DAPG) are G3. GTP is bound by residues 91–95 (DAPGH) and 153–156 (NKMD). The tract at residues 153-156 (NKMD) is G4. Lys-187 carries the post-translational modification N6,N6,N6-trimethyllysine. The G5 stretch occupies residues 194-196 (SGW). Lys-265 carries the post-translational modification N6-methyllysine. N6,N6,N6-trimethyllysine is present on residues Lys-310 and Lys-400.

This sequence belongs to the TRAFAC class translation factor GTPase superfamily. Classic translation factor GTPase family. EF-Tu/EF-1A subfamily.

It is found in the cytoplasm. Its function is as follows. This protein promotes the GTP-dependent binding of aminoacyl-tRNA to the A-site of ribosomes during protein biosynthesis. In Pyropia yezoensis (Susabi-nori), this protein is Elongation factor 1-alpha.